The chain runs to 327 residues: GMP reductase (327 aa).

Cys175 functions as the Thioimidate intermediate in the catalytic mechanism. NADP(+) is bound at residue 204–227 (IIADGGIRTHGDIAKSVRFGASMV).

Belongs to the IMPDH/GMPR family. GuaC type 2 subfamily.

The enzyme catalyses IMP + NH4(+) + NADP(+) = GMP + NADPH + 2 H(+). In terms of biological role, catalyzes the irreversible NADPH-dependent deamination of GMP to IMP. It functions in the conversion of nucleobase, nucleoside and nucleotide derivatives of G to A nucleotides, and in maintaining the intracellular balance of A and G nucleotides. The sequence is that of GMP reductase from Lysinibacillus sphaericus (strain C3-41).